The following is a 124-amino-acid chain: UPF0357 protein C1687.07 (124 aa).

The N-terminal stretch at 1–24 (MASFHIIVSYVTVVLAIIIAITFA) is a signal peptide.

Belongs to the UPF0357 family.

The protein is UPF0357 protein C1687.07 of Schizosaccharomyces pombe (strain 972 / ATCC 24843) (Fission yeast).